The chain runs to 452 residues: Poly(A) polymerase I (452 aa).

Catalysis depends on residues D68, D70, and D150. Residues 427 to 452 (EQQRLHPKPKKKYYRPRRRKTTCSAE) are disordered. Positions 431–452 (LHPKPKKKYYRPRRRKTTCSAE) are enriched in basic residues.

This sequence belongs to the tRNA nucleotidyltransferase/poly(A) polymerase family.

The catalysed reaction is RNA(n) + ATP = RNA(n)-3'-adenine ribonucleotide + diphosphate. Functionally, adds poly(A) tail to the 3' end of many RNAs, which usually targets these RNAs for decay. Plays a significant role in the global control of gene expression, through influencing the rate of transcript degradation, and in the general RNA quality control. In Haemophilus influenzae (strain ATCC 51907 / DSM 11121 / KW20 / Rd), this protein is Poly(A) polymerase I.